Consider the following 714-residue polypeptide: Fatty acid oxidation complex subunit alpha (714 aa).

The interval 1 to 190 (MEMASAFTLN…KLGLVDDVVP (190 aa)) is enoyl-CoA hydratase. Residues 306 to 714 (APLNSVGILG…FWKTTATDLQ (409 aa)) are 3-hydroxyacyl-CoA dehydrogenase.

This sequence in the N-terminal section; belongs to the enoyl-CoA hydratase/isomerase family. In the central section; belongs to the 3-hydroxyacyl-CoA dehydrogenase family. Heterotetramer of two alpha chains (FadJ) and two beta chains (FadI).

It localises to the cytoplasm. It catalyses the reaction a (3S)-3-hydroxyacyl-CoA = a (2E)-enoyl-CoA + H2O. The enzyme catalyses a 4-saturated-(3S)-3-hydroxyacyl-CoA = a (3E)-enoyl-CoA + H2O. It carries out the reaction a (3S)-3-hydroxyacyl-CoA + NAD(+) = a 3-oxoacyl-CoA + NADH + H(+). The catalysed reaction is (3S)-3-hydroxybutanoyl-CoA = (3R)-3-hydroxybutanoyl-CoA. Its pathway is lipid metabolism; fatty acid beta-oxidation. Its function is as follows. Catalyzes the formation of a hydroxyacyl-CoA by addition of water on enoyl-CoA. Also exhibits 3-hydroxyacyl-CoA epimerase and 3-hydroxyacyl-CoA dehydrogenase activities. The protein is Fatty acid oxidation complex subunit alpha of Shigella boydii serotype 18 (strain CDC 3083-94 / BS512).